The following is an 875-amino-acid chain: Peptidyl-glycine alpha-amidating monooxygenase B (875 aa).

The signal sequence occupies residues Met-1–Arg-39. The peptidylglycine alpha-hydroxylating monooxygenase stretch occupies residues Met-3 to Gln-394. Residues Ser-40–Gly-763 are Intragranular-facing. Disulfide bonds link Cys-45–Cys-184, Cys-79–Cys-124, Cys-112–Cys-129, Cys-225–Cys-332, and Cys-291–Cys-313. Residues His-105 and His-106 each contribute to the Cu(2+) site. Cu(2+)-binding residues include His-170, His-240, His-242, and Met-312. The segment at Asp-395–Val-716 is peptidyl-alpha-hydroxyglycine alpha-amidating lyase. Arg-430 is an a protein binding site. Asn-465 carries an N-linked (GlcNAc...) asparagine glycan. NHL repeat units follow at residues Ser-467–Glu-508, Leu-516–Asn-561, and Gly-569–Lys-613. Intrachain disulfides connect Cys-530-Cys-551 and Cys-598-Cys-609. A protein contacts are provided by Tyr-550 and Arg-602. An N-linked (GlcNAc...) asparagine glycan is attached at Asn-662. The stretch at Gly-666–Ser-709 is one NHL 4 repeat. The tract at residues His-735 to Ser-755 is disordered. Asn-743 carries an N-linked (GlcNAc...) asparagine glycan. The segment covering Asn-743–Ser-755 has biased composition (polar residues). A helical transmembrane segment spans residues Val-764–Ile-787. Residues Arg-788–Ser-875 lie on the Cytoplasmic side of the membrane. The segment at Lys-837–Ser-875 is disordered. Residues Glu-850–Tyr-864 are compositionally biased toward acidic residues.

The protein in the C-terminal section; belongs to the peptidyl-alpha-hydroxyglycine alpha-amidating lyase family. In the N-terminal section; belongs to the copper type II ascorbate-dependent monooxygenase family. In terms of assembly, monomer. Zn(2+) serves as cofactor. Cu(2+) is required as a cofactor.

It localises to the cytoplasmic vesicle. Its subcellular location is the secretory vesicle membrane. The catalysed reaction is a [peptide]-C-terminal glycine + 2 L-ascorbate + O2 = a [peptide]-C-terminal (2S)-2-hydroxyglycine + 2 monodehydro-L-ascorbate radical + H2O. It carries out the reaction a [peptide]-C-terminal (2S)-2-hydroxyglycine = a [peptide]-C-terminal amide + glyoxylate. Functionally, bifunctional enzyme that catalyzes amidation of the C-terminus of proteins. Alpha-amidation is present at the C-terminus of many endocrine hormones and neuropeptides and is required for their activity. C-terminal amidation also takes place in response to protein fragmentation triggered by oxidative stress, promoting degradation of amidated protein fragments by the proteasome. Alpha-amidation involves two sequential reactions, both of which are catalyzed by separate catalytic domains of the enzyme. The first step, catalyzed by peptidyl alpha-hydroxylating monooxygenase (PHM) domain, is the copper-, ascorbate-, and O2- dependent stereospecific hydroxylation (with S stereochemistry) at the alpha-carbon (C-alpha) of the C-terminal glycine of the peptidylglycine substrate. The second step, catalyzed by the peptidylglycine amidoglycolate lyase (PAL) domain, is the zinc-dependent cleavage of the N-C-alpha bond, producing the alpha-amidated peptide and glyoxylate. This Xenopus laevis (African clawed frog) protein is Peptidyl-glycine alpha-amidating monooxygenase B (pam-b).